We begin with the raw amino-acid sequence, 726 residues long: Catalase-peroxidase (726 aa).

Residues 1–33 form a disordered region; sequence MSTSDDIHNTTATGKCPFHQGGHDQSAGGGTTT. Residues 105 to 226 constitute a cross-link (tryptophyl-tyrosyl-methioninium (Trp-Tyr) (with M-252)); that stretch reads WHGAGTYRSI…LGATEMGLIY (122 aa). His106 functions as the Proton acceptor in the catalytic mechanism. The segment at residues 226–252 is a cross-link (tryptophyl-tyrosyl-methioninium (Tyr-Met) (with W-105)); the sequence is YVNPEGPDHSGEPLSAAAAIRATFGNM. Residue His267 participates in heme b binding.

Belongs to the peroxidase family. Peroxidase/catalase subfamily. Homodimer or homotetramer. Requires heme b as cofactor. Post-translationally, formation of the three residue Trp-Tyr-Met cross-link is important for the catalase, but not the peroxidase activity of the enzyme.

It catalyses the reaction H2O2 + AH2 = A + 2 H2O. The enzyme catalyses 2 H2O2 = O2 + 2 H2O. Its function is as follows. Bifunctional enzyme with both catalase and broad-spectrum peroxidase activity. The polypeptide is Catalase-peroxidase (Escherichia coli O1:K1 / APEC).